The sequence spans 198 residues: CXXC-type zinc finger protein 4 (198 aa).

A disordered region spans residues 114–134 (NHSSSSSSSSGGAGGANPAKK). The CXXC-type zinc-finger motif lies at 132–173 (AKKKRKRCGVCVPCKRLINCGVCSSCRNRKTGHQICKFRKCE). The Zn(2+) site is built by cysteine 139, cysteine 142, cysteine 145, cysteine 151, cysteine 154, and cysteine 157. The interaction with DVL1 stretch occupies residues 161–166 (KTGHQI). The Zn(2+) site is built by cysteine 167 and cysteine 172.

As to quaternary structure, interacts with the PDZ domain of DVL1.

The protein localises to the cytoplasm. Acts as a negative regulator of the Wnt signaling pathway via its interaction with DVL1. Binds preferentially to DNA containing cytidine-phosphate-guanosine (CpG) dinucleotides over CpH (H=A, T, and C), hemimethylated-CpG and hemimethylated-hydroxymethyl-CpG. The protein is CXXC-type zinc finger protein 4 (CXXC4) of Homo sapiens (Human).